Here is a 475-residue protein sequence, read N- to C-terminus: 3-isopropylmalate dehydratase large subunit (475 aa).

3 residues coordinate [4Fe-4S] cluster: Cys353, Cys414, and Cys417.

The protein belongs to the aconitase/IPM isomerase family. LeuC type 1 subfamily. As to quaternary structure, heterodimer of LeuC and LeuD. It depends on [4Fe-4S] cluster as a cofactor.

It carries out the reaction (2R,3S)-3-isopropylmalate = (2S)-2-isopropylmalate. It functions in the pathway amino-acid biosynthesis; L-leucine biosynthesis; L-leucine from 3-methyl-2-oxobutanoate: step 2/4. Its function is as follows. Catalyzes the isomerization between 2-isopropylmalate and 3-isopropylmalate, via the formation of 2-isopropylmaleate. The protein is 3-isopropylmalate dehydratase large subunit of Marinomonas sp. (strain MWYL1).